The following is a 223-amino-acid chain: DNA mismatch repair protein MutH (223 aa).

Belongs to the MutH family.

The protein localises to the cytoplasm. Its function is as follows. Sequence-specific endonuclease that cleaves unmethylated GATC sequences. It is involved in DNA mismatch repair. This chain is DNA mismatch repair protein MutH, found in Shewanella baltica (strain OS195).